A 500-amino-acid chain; its full sequence is Coiled-coil domain-containing protein 85A (500 aa).

Over residues Met-1 to Ser-23 the composition is skewed to low complexity. Residues Met-1–Asp-30 are disordered. Coiled-coil stretches lie at residues Glu-38–Cys-104 and Met-132–Lys-171. Disordered stretches follow at residues Arg-200–Asn-405 and Asn-426–Pro-465. Residues Asp-204–Asp-215 show a composition bias toward low complexity. Over residues His-231–Leu-254 the composition is skewed to basic and acidic residues. Gly residues predominate over residues Gly-372 to Arg-381. A compositionally biased stretch (basic and acidic residues) spans Gly-383 to Ser-395. A coiled-coil region spans residues Met-404–Leu-429. Over residues Phe-434–Pro-463 the composition is skewed to polar residues. The residue at position 488 (Arg-488) is an Asymmetric dimethylarginine.

Belongs to the CCDC85 family. As to quaternary structure, may interact with ARVCF; CTNND1; CTNND2 and PKP4.

It is found in the cell junction. The protein localises to the adherens junction. May play a role in cell-cell adhesion and epithelium development through its interaction with proteins of the beta-catenin family. This Mus musculus (Mouse) protein is Coiled-coil domain-containing protein 85A (Ccdc85a).